The chain runs to 468 residues: Secreted triacylglycerol lipase LIP2 (468 aa).

Residues 1-22 form the signal peptide; sequence MFGFRLFILAAVALAYIQCAAA. A disulfide bridge connects residues Cys-125 and Cys-295. The Nucleophile role is filled by Ser-209. 3 N-linked (GlcNAc...) asparagine glycosylation sites follow: Asn-242, Asn-252, and Asn-279. Active-site residues include Asp-355 and His-389.

It belongs to the AB hydrolase superfamily. Lipase family. Class Lip subfamily.

The protein localises to the secreted. The catalysed reaction is a triacylglycerol + H2O = a diacylglycerol + a fatty acid + H(+). The enzyme catalyses a monoacylglycerol + H2O = glycerol + a fatty acid + H(+). It carries out the reaction a diacylglycerol + H2O = a monoacylglycerol + a fatty acid + H(+). In terms of biological role, secreted lipase that hydrolyzes acylglycerol lipids such as triacylglycerols and consequently releases free fatty acid. Due to an absence of fatty acid synthase genes in Malassezia species, secretory lipases are essential for the yeast to generate free fatty acids from degradation of sebum and assimilate them as lipid sources for growth. Plays important roles not only in lipid metabolism but also in the immune response of host cells and pathogenesis. This chain is Secreted triacylglycerol lipase LIP2, found in Malassezia furfur (Pityriasis versicolor infection agent).